A 156-amino-acid chain; its full sequence is ATP synthase subunit b (156 aa).

The helical transmembrane segment at 7 to 29 (LLGQAIAFALFVWFCMKYVWPPI) threads the bilayer.

Belongs to the ATPase B chain family. In terms of assembly, F-type ATPases have 2 components, F(1) - the catalytic core - and F(0) - the membrane proton channel. F(1) has five subunits: alpha(3), beta(3), gamma(1), delta(1), epsilon(1). F(0) has three main subunits: a(1), b(2) and c(10-14). The alpha and beta chains form an alternating ring which encloses part of the gamma chain. F(1) is attached to F(0) by a central stalk formed by the gamma and epsilon chains, while a peripheral stalk is formed by the delta and b chains.

Its subcellular location is the cell inner membrane. In terms of biological role, f(1)F(0) ATP synthase produces ATP from ADP in the presence of a proton or sodium gradient. F-type ATPases consist of two structural domains, F(1) containing the extramembraneous catalytic core and F(0) containing the membrane proton channel, linked together by a central stalk and a peripheral stalk. During catalysis, ATP synthesis in the catalytic domain of F(1) is coupled via a rotary mechanism of the central stalk subunits to proton translocation. Functionally, component of the F(0) channel, it forms part of the peripheral stalk, linking F(1) to F(0). This chain is ATP synthase subunit b, found in Aliivibrio salmonicida (strain LFI1238) (Vibrio salmonicida (strain LFI1238)).